The primary structure comprises 391 residues: UPF0229 protein CA_C0580 (391 aa).

Disordered stretches follow at residues M1–D20 and V75–G109. Positions G96 to N106 are enriched in gly residues.

Belongs to the UPF0229 family.

The protein is UPF0229 protein CA_C0580 of Clostridium acetobutylicum (strain ATCC 824 / DSM 792 / JCM 1419 / IAM 19013 / LMG 5710 / NBRC 13948 / NRRL B-527 / VKM B-1787 / 2291 / W).